The following is a 504-amino-acid chain: ATP synthase subunit alpha (504 aa).

Residue 170–177 (GDRQTGKT) coordinates ATP.

It belongs to the ATPase alpha/beta chains family. F-type ATPases have 2 components, CF(1) - the catalytic core - and CF(0) - the membrane proton channel. CF(1) has five subunits: alpha(3), beta(3), gamma(1), delta(1), epsilon(1). CF(0) has three main subunits: a(1), b(2) and c(9-12). The alpha and beta chains form an alternating ring which encloses part of the gamma chain. CF(1) is attached to CF(0) by a central stalk formed by the gamma and epsilon chains, while a peripheral stalk is formed by the delta and b chains.

It localises to the cell membrane. It catalyses the reaction ATP + H2O + 4 H(+)(in) = ADP + phosphate + 5 H(+)(out). Its function is as follows. Produces ATP from ADP in the presence of a proton gradient across the membrane. The alpha chain is a regulatory subunit. The polypeptide is ATP synthase subunit alpha (Shouchella clausii (strain KSM-K16) (Alkalihalobacillus clausii)).